The primary structure comprises 594 residues: Trehalase (594 aa).

Positions 1 to 27 (MDFLNKKIQKILFICILSFLIVNLTKS) are cleaved as a signal peptide. N-linked (GlcNAc...) asparagine glycosylation is found at Asn56, Asn70, Asn97, and Asn166. Residues Arg190, 197–198 (WD), and Asn234 each bind substrate. Residue Asn242 is glycosylated (N-linked (GlcNAc...) asparagine). 243–245 (RSQ) contacts substrate. Residues Asn261 and Asn305 are each glycosylated (N-linked (GlcNAc...) asparagine). Substrate-binding positions include 312 to 314 (RPE) and Gly346. The active-site Proton donor/acceptor is the Asp348. N-linked (GlcNAc...) asparagine glycosylation is found at Asn361, Asn395, Asn513, and Asn537. Catalysis depends on Glu549, which acts as the Proton donor/acceptor. Glu564 is a substrate binding site.

Belongs to the glycosyl hydrolase 37 family.

The catalysed reaction is alpha,alpha-trehalose + H2O = alpha-D-glucose + beta-D-glucose. This chain is Trehalase (treh), found in Dictyostelium discoideum (Social amoeba).